Here is a 55-residue protein sequence, read N- to C-terminus: Cop-6 protein (55 aa).

This sequence belongs to the transcriptional regulatory CopG/NikR family.

In terms of biological role, acts in trans as a negative regulatory element in pE194 replication. The polypeptide is Cop-6 protein (Staphylococcus aureus).